The sequence spans 273 residues: Formamidopyrimidine-DNA glycosylase (273 aa).

The active-site Schiff-base intermediate with DNA is proline 2. Residue glutamate 3 is the Proton donor of the active site. The Proton donor; for beta-elimination activity role is filled by lysine 58. DNA contacts are provided by histidine 91, arginine 109, and arginine 154. The segment at 239–273 adopts an FPG-type zinc-finger fold; the sequence is FVYARTGEPCRICNAPVRQIVQGQRSTFYCPNCQK. Residue arginine 263 is the Proton donor; for delta-elimination activity of the active site.

It belongs to the FPG family. As to quaternary structure, monomer. The cofactor is Zn(2+).

It catalyses the reaction Hydrolysis of DNA containing ring-opened 7-methylguanine residues, releasing 2,6-diamino-4-hydroxy-5-(N-methyl)formamidopyrimidine.. The catalysed reaction is 2'-deoxyribonucleotide-(2'-deoxyribose 5'-phosphate)-2'-deoxyribonucleotide-DNA = a 3'-end 2'-deoxyribonucleotide-(2,3-dehydro-2,3-deoxyribose 5'-phosphate)-DNA + a 5'-end 5'-phospho-2'-deoxyribonucleoside-DNA + H(+). In terms of biological role, involved in base excision repair of DNA damaged by oxidation or by mutagenic agents. Acts as a DNA glycosylase that recognizes and removes damaged bases. Has a preference for oxidized purines, such as 7,8-dihydro-8-oxoguanine (8-oxoG). Has AP (apurinic/apyrimidinic) lyase activity and introduces nicks in the DNA strand. Cleaves the DNA backbone by beta-delta elimination to generate a single-strand break at the site of the removed base with both 3'- and 5'-phosphates. This chain is Formamidopyrimidine-DNA glycosylase, found in Herminiimonas arsenicoxydans.